A 173-amino-acid polypeptide reads, in one-letter code: Phosphopantetheine adenylyltransferase (173 aa).

Serine 9 contacts substrate. ATP-binding positions include 9-10 (SF) and histidine 17. Positions 41, 73, and 87 each coordinate substrate. Residues 88–90 (GLR), glutamate 98, and 123–129 (YQHLSSS) contribute to the ATP site.

It belongs to the bacterial CoaD family. As to quaternary structure, homohexamer. Mg(2+) serves as cofactor.

The protein localises to the cytoplasm. It carries out the reaction (R)-4'-phosphopantetheine + ATP + H(+) = 3'-dephospho-CoA + diphosphate. It functions in the pathway cofactor biosynthesis; coenzyme A biosynthesis; CoA from (R)-pantothenate: step 4/5. Its function is as follows. Reversibly transfers an adenylyl group from ATP to 4'-phosphopantetheine, yielding dephospho-CoA (dPCoA) and pyrophosphate. This Limosilactobacillus reuteri (strain DSM 20016) (Lactobacillus reuteri) protein is Phosphopantetheine adenylyltransferase.